We begin with the raw amino-acid sequence, 269 residues long: Shikimate dehydrogenase (NADP(+)) (269 aa).

Residues 17–19 (SKS) and threonine 64 contribute to the shikimate site. Catalysis depends on lysine 68, which acts as the Proton acceptor. Aspartate 80 serves as a coordination point for NADP(+). Positions 89 and 105 each coordinate shikimate. NADP(+)-binding positions include 130-134 (GAGGA), 154-159 (NRTRAK), and methionine 213. Shikimate is bound at residue tyrosine 215. Glycine 237 provides a ligand contact to NADP(+).

The protein belongs to the shikimate dehydrogenase family. Homodimer.

It carries out the reaction shikimate + NADP(+) = 3-dehydroshikimate + NADPH + H(+). It functions in the pathway metabolic intermediate biosynthesis; chorismate biosynthesis; chorismate from D-erythrose 4-phosphate and phosphoenolpyruvate: step 4/7. Involved in the biosynthesis of the chorismate, which leads to the biosynthesis of aromatic amino acids. Catalyzes the reversible NADPH linked reduction of 3-dehydroshikimate (DHSA) to yield shikimate (SA). In Neisseria meningitidis serogroup C (strain 053442), this protein is Shikimate dehydrogenase (NADP(+)).